A 440-amino-acid polypeptide reads, in one-letter code: Ribosomal protein uS12 methylthiotransferase RimO (440 aa).

Residues 6–116 (PKVGFVSLGC…VVSAVHEVVP (111 aa)) enclose the MTTase N-terminal domain. Residues Cys-15, Cys-51, Cys-80, Cys-149, Cys-153, and Cys-156 each contribute to the [4Fe-4S] cluster site. A Radical SAM core domain is found at 135–374 (LTPRHYAYLK…AHQQAISSAR (240 aa)). The TRAM domain maps to 376–440 (QAKIGLEMDV…DEYDMWGELV (65 aa)).

Belongs to the methylthiotransferase family. RimO subfamily. [4Fe-4S] cluster serves as cofactor.

The protein localises to the cytoplasm. The catalysed reaction is L-aspartate(89)-[ribosomal protein uS12]-hydrogen + (sulfur carrier)-SH + AH2 + 2 S-adenosyl-L-methionine = 3-methylsulfanyl-L-aspartate(89)-[ribosomal protein uS12]-hydrogen + (sulfur carrier)-H + 5'-deoxyadenosine + L-methionine + A + S-adenosyl-L-homocysteine + 2 H(+). Catalyzes the methylthiolation of an aspartic acid residue of ribosomal protein uS12. This chain is Ribosomal protein uS12 methylthiotransferase RimO, found in Ectopseudomonas mendocina (strain ymp) (Pseudomonas mendocina).